The primary structure comprises 78 residues: Rubredoxin (78 aa).

Residues aspartate 23–leucine 74 form the Rubredoxin-like domain. Fe cation is bound by residues cysteine 28, cysteine 31, cysteine 61, and cysteine 64.

It belongs to the rubredoxin family. The cofactor is Fe(3+).

In terms of biological role, rubredoxin is a small nonheme, iron protein lacking acid-labile sulfide. Its single Fe, chelated to 4 Cys, functions as an electron acceptor and may also stabilize the conformation of the molecule. Could be involved in hydrogenase-linked redox processes. The chain is Rubredoxin (hoxR) from Cupriavidus necator (strain ATCC 17699 / DSM 428 / KCTC 22496 / NCIMB 10442 / H16 / Stanier 337) (Ralstonia eutropha).